Consider the following 369-residue polypeptide: Arsenite methyltransferase (369 aa).

Serine 46 carries the phosphoserine modification.

The protein belongs to the methyltransferase superfamily. Arsenite methyltransferase family.

The protein localises to the cytoplasm. Its subcellular location is the cytosol. The enzyme catalyses arsenic triglutathione + [thioredoxin]-dithiol + S-adenosyl-L-methionine + 2 H2O = methylarsonous acid + [thioredoxin]-disulfide + 3 glutathione + S-adenosyl-L-homocysteine + H(+). It catalyses the reaction arsenic triglutathione + 2 [thioredoxin]-dithiol + 2 S-adenosyl-L-methionine + H2O = dimethylarsinous acid + 2 [thioredoxin]-disulfide + 3 glutathione + 2 S-adenosyl-L-homocysteine + 2 H(+). The catalysed reaction is arsenic triglutathione + 3 [thioredoxin]-dithiol + 3 S-adenosyl-L-methionine = trimethylarsine + 3 [thioredoxin]-disulfide + 3 glutathione + 3 S-adenosyl-L-homocysteine + 3 H(+). Its function is as follows. Catalyzes the transfer of a methyl group from AdoMet to trivalent arsenicals producing methylated and dimethylated arsenicals. It methylates arsenite to form methylarsonate, Me-AsO(3)H(2), which is reduced by methylarsonate reductase to methylarsonite, Me-As(OH)2. Methylarsonite is also a substrate and it is converted into the much less toxic compound dimethylarsinate (cacodylate), Me(2)As(O)-OH. The sequence is that of Arsenite methyltransferase (As3mt) from Rattus norvegicus (Rat).